A 477-amino-acid chain; its full sequence is Argininosuccinate lyase (477 aa).

It belongs to the lyase 1 family. Argininosuccinate lyase subfamily.

It is found in the cytoplasm. It carries out the reaction 2-(N(omega)-L-arginino)succinate = fumarate + L-arginine. It participates in amino-acid biosynthesis; L-arginine biosynthesis; L-arginine from L-ornithine and carbamoyl phosphate: step 3/3. This Acinetobacter baumannii (strain ACICU) protein is Argininosuccinate lyase.